A 215-amino-acid chain; its full sequence is 3-isopropylmalate dehydratase small subunit (215 aa).

Belongs to the LeuD family. LeuD type 1 subfamily. Heterodimer of LeuC and LeuD.

The enzyme catalyses (2R,3S)-3-isopropylmalate = (2S)-2-isopropylmalate. The protein operates within amino-acid biosynthesis; L-leucine biosynthesis; L-leucine from 3-methyl-2-oxobutanoate: step 2/4. Catalyzes the isomerization between 2-isopropylmalate and 3-isopropylmalate, via the formation of 2-isopropylmaleate. This chain is 3-isopropylmalate dehydratase small subunit, found in Stutzerimonas stutzeri (strain A1501) (Pseudomonas stutzeri).